We begin with the raw amino-acid sequence, 60 residues long: MSDKKIKVTLVKSVIGTKQSHRATVRGLGLRRLNHTVELVDTPAVRGMVTKVAYLVKVEA.

It belongs to the universal ribosomal protein uL30 family. Part of the 50S ribosomal subunit.

This chain is Large ribosomal subunit protein uL30, found in Azoarcus sp. (strain BH72).